The following is a 90-amino-acid chain: Small ribosomal subunit protein uS15c (90 aa).

It belongs to the universal ribosomal protein uS15 family. As to quaternary structure, part of the 30S ribosomal subunit.

The protein resides in the plastid. This is Small ribosomal subunit protein uS15c (rps15) from Cuscuta reflexa (Southern Asian dodder).